Consider the following 250-residue polypeptide: UPF0193 protein EVG1 homolog (250 aa).

A disordered region spans residues 86-110 (ESLRNGEPLPLPEPPRPNTNNDPDK).

This sequence belongs to the UPF0193 (EVG1) family.

This chain is UPF0193 protein EVG1 homolog, found in Drosophila melanogaster (Fruit fly).